Here is a 185-residue protein sequence, read N- to C-terminus: Ribosome-recycling factor (185 aa).

It belongs to the RRF family.

The protein localises to the cytoplasm. Its function is as follows. Responsible for the release of ribosomes from messenger RNA at the termination of protein biosynthesis. May increase the efficiency of translation by recycling ribosomes from one round of translation to another. The polypeptide is Ribosome-recycling factor (Clostridium novyi (strain NT)).